The sequence spans 415 residues: Gamma-glutamyl phosphate reductase (415 aa).

The protein belongs to the gamma-glutamyl phosphate reductase family.

It is found in the cytoplasm. It carries out the reaction L-glutamate 5-semialdehyde + phosphate + NADP(+) = L-glutamyl 5-phosphate + NADPH + H(+). Its pathway is amino-acid biosynthesis; L-proline biosynthesis; L-glutamate 5-semialdehyde from L-glutamate: step 2/2. Its function is as follows. Catalyzes the NADPH-dependent reduction of L-glutamate 5-phosphate into L-glutamate 5-semialdehyde and phosphate. The product spontaneously undergoes cyclization to form 1-pyrroline-5-carboxylate. The protein is Gamma-glutamyl phosphate reductase of Bacillus thuringiensis subsp. konkukian (strain 97-27).